Reading from the N-terminus, the 565-residue chain is Polyadenylate-binding protein 1-A (565 aa).

4 RRM domains span residues 10–88 (SSLY…WSQR), 98–175 (GNVF…PFKS), 188–265 (TNVF…RAQK), and 284–362 (VNLY…LAQR). A disordered region spans residues 435-466 (YARGQPRQNGPRQNGGQPRQNGPRPDVSGAQP). Polar residues predominate over residues 440 to 454 (PRQNGPRQNGGQPRQ). The PABC domain occupies 489-565 (SALNLQSIIN…REALEVLGSN (77 aa)).

It belongs to the polyadenylate-binding protein type-1 family.

It is found in the cytoplasm. Its subcellular location is the nucleus. Binds the poly(A) tail of mRNA. Appears to be an important mediator of the multiple roles of the poly(A) tail in mRNA biogenesis, stability and translation. In Dictyostelium discoideum (Social amoeba), this protein is Polyadenylate-binding protein 1-A (pabpc1A).